The following is a 1028-amino-acid chain: RNA cytidine acetyltransferase 1 (1028 aa).

Residues 286–295 (GRGKSAALGL) and Arg-460 each bind ATP. Positions 548–731 (VLLGPVDESK…FAPFYISQIP (184 aa)) constitute an N-acetyltransferase domain. Acetyl-CoA is bound by residues 619-621 (IAV), 626-632 (MKMGYGS), and Lys-719. The disordered stretch occupies residues 989 to 1028 (ISIESTKTDNKKEKPSGFDKSAKKRGNDKHSSTSNKKRRA). Positions 994 to 1009 (TKTDNKKEKPSGFDKS) are enriched in basic and acidic residues.

The protein belongs to the RNA cytidine acetyltransferase family. NAT10 subfamily.

It localises to the nucleus. The protein localises to the nucleolus. It carries out the reaction a cytidine in 18S rRNA + acetyl-CoA + ATP + H2O = an N(4)-acetylcytidine in 18S rRNA + ADP + phosphate + CoA + H(+). The catalysed reaction is a cytidine in tRNA + acetyl-CoA + ATP + H2O = an N(4)-acetylcytidine in tRNA + ADP + phosphate + CoA + H(+). RNA cytidine acetyltransferase with specificity toward both 18S rRNA and tRNAs. Catalyzes the formation of N(4)-acetylcytidine (ac4C) in 18S rRNA. Required for early nucleolar cleavages of precursor rRNA at sites A0, A1 and A2 during 18S rRNA synthesis. Catalyzes the formation of ac4C in serine and leucine tRNAs. Requires a tRNA-binding adapter protein for full tRNA acetyltransferase activity but not for 18S rRNA acetylation. The sequence is that of RNA cytidine acetyltransferase 1 from Arabidopsis thaliana (Mouse-ear cress).